A 487-amino-acid polypeptide reads, in one-letter code: Lysophospholipid acyltransferase 5 (487 aa).

Ala2 carries the N-acetylalanine modification. 6 helical membrane-spanning segments follow: residues 44-64 (LIISIFLGYPFALFYRHYLFY), 84-104 (FNFGNQLYHSLLCIVLQFLIL), 111-131 (ITAVLTTFCFQMAYLLAGYYY), 180-200 (GVPSLLEVAGFSYFYGAFLVG), 227-247 (IIPALKRLSLGLFYLVGYTLL), and 285-305 (VTCWLVTEGVCILTGLGFNGF). Active-site residues include Asn338 and His374. The next 3 helical transmembrane spans lie at 364–384 (GLSLLFLALWHGLHSGYLVCF), 422–442 (LVQQTIHWLFMGYSMTAFCLF), and 453–473 (SIYFLGHIFFLSLLFILPYIH). Positions 484–487 (KKME) match the Di-lysine motif motif.

This sequence belongs to the membrane-bound acyltransferase family. As to expression, highly expressed in liver, pancreas and adipose tissue. Very low expression in skeletal muscle and heart. Detected in neutrophils.

It localises to the endoplasmic reticulum membrane. It catalyses the reaction a 1-acyl-sn-glycero-3-phosphocholine + an acyl-CoA = a 1,2-diacyl-sn-glycero-3-phosphocholine + CoA. The enzyme catalyses a 1-acyl-sn-glycero-3-phosphoethanolamine + an acyl-CoA = a 1,2-diacyl-sn-glycero-3-phosphoethanolamine + CoA. It carries out the reaction a 1-acyl-sn-glycero-3-phospho-L-serine + an acyl-CoA = a 1,2-diacyl-sn-glycero-3-phospho-L-serine + CoA. The catalysed reaction is (9Z,12Z)-octadecadienoyl-CoA + a 1-acyl-sn-glycero-3-phosphocholine = 1-acyl-2-(9Z,12Z)-octadecadienoyl-sn-glycero-3-phosphocholine + CoA. It catalyses the reaction (5Z,8Z,11Z,14Z)-eicosatetraenoyl-CoA + a 1-acyl-sn-glycero-3-phosphocholine = 1-acyl-2-(5Z,8Z,11Z,14Z-eicosatetraenoyl)-sn-glycero-3-phosphocholine + CoA. The enzyme catalyses dodecanoyl-CoA + 1-hexadecanoyl-sn-glycero-3-phosphocholine = 1-hexadecanoyl-2-dodecanoyl-sn-glycero-3-phosphocholine + CoA. It carries out the reaction octadecanoyl-CoA + 1-hexadecanoyl-sn-glycero-3-phosphocholine = 1-hexadecanoyl-2-octadecanoyl-sn-glycero-3-phosphocholine + CoA. The catalysed reaction is 1-dodecanoyl-sn-glycero-3-phosphocholine + hexadecanoyl-CoA = 1-dodecanoyl-2-hexadecanoyl-sn-glycero-3-phosphocholine + CoA. It catalyses the reaction 1-tetradecanoyl-sn-glycero-3-phosphocholine + hexadecanoyl-CoA = 1-tetradecanoyl-2-hexadecanoyl-sn-glycero-3-phosphocholine + CoA. The enzyme catalyses 1-hexadecanoyl-sn-glycero-3-phosphocholine + hexadecanoyl-CoA = 1,2-dihexadecanoyl-sn-glycero-3-phosphocholine + CoA. It carries out the reaction 1-octadecanoyl-sn-glycero-3-phosphocholine + hexadecanoyl-CoA = 1-octadecanoyl-2-hexadecanoyl-sn-glycero-3-phosphocholine + CoA. The catalysed reaction is 1-(9Z-octadecenoyl)-sn-glycero-3-phosphocholine + hexadecanoyl-CoA = 1-(9Z-octadecenoyl)-2-hexadecanoyl-sn-glycero-3-phosphocholine + CoA. It catalyses the reaction (9Z)-hexadecenoyl-CoA + 1-hexadecanoyl-sn-glycero-3-phosphocholine = 1-hexadecanoyl-2-(9Z-hexadecenoyl)-sn-glycero-3-phosphocholine + CoA. The enzyme catalyses 1-hexadecanoyl-sn-glycero-3-phosphocholine + (9Z)-octadecenoyl-CoA = 1-hexadecanoyl-2-(9Z-octadecenoyl)-sn-glycero-3-phosphocholine + CoA. It carries out the reaction (9Z,12Z)-octadecadienoyl-CoA + 1-hexadecanoyl-sn-glycero-3-phosphocholine = 1-hexadecanoyl-2-(9Z,12Z-octadecadienoyl)-sn-glycero-3-phosphocholine + CoA. The catalysed reaction is 1-dodecanoyl-sn-glycero-3-phosphocholine + (5Z,8Z,11Z,14Z)-eicosatetraenoyl-CoA = 1-dodecanoyl-2-(5Z,8Z,11Z,14Z)-eicosatetraenoyl-sn-glycero-3-phosphocholine + CoA. It catalyses the reaction (5Z,8Z,11Z,14Z)-eicosatetraenoyl-CoA + 1-hexadecanoyl-sn-glycero-3-phosphocholine = 1-hexadecanoyl-2-(5Z,8Z,11Z,14Z-eicosatetraenoyl)-sn-glycero-3-phosphocholine + CoA. The enzyme catalyses 1-octadecanoyl-sn-glycero-3-phosphocholine + (5Z,8Z,11Z,14Z)-eicosatetraenoyl-CoA = 1-octadecanoyl-2-(5Z,8Z,11Z,14Z-eicosatetraenoyl)-sn-glycero-3-phosphocholine + CoA. It carries out the reaction 1-eicosanoyl-sn-glycero-3-phosphocholine + (5Z,8Z,11Z,14Z)-eicosatetraenoyl-CoA = 1-eicosanoyl-2-(5Z,8Z,11Z,14Z)-eicosatetraenoyl-sn-glycero-3-phosphocholine + CoA. The catalysed reaction is 1-(9Z-octadecenoyl)-sn-glycero-3-phosphocholine + (9Z)-octadecenoyl-CoA = 1,2-di-(9Z-octadecenoyl)-sn-glycero-3-phosphocholine + CoA. It catalyses the reaction 1-(9Z-octadecenoyl)-sn-glycero-3-phosphocholine + (9Z,12Z)-octadecadienoyl-CoA = 1-(9Z)-octadecenoyl-2-(9Z,12Z)-octadecadienoyl-sn-glycero-3-phosphocholine + CoA. The enzyme catalyses 1-(9Z-octadecenoyl)-sn-glycero-3-phosphocholine + (5Z,8Z,11Z,14Z)-eicosatetraenoyl-CoA = 1-(9Z)-octadecenoyl-2-(5Z,8Z,11Z,14Z)-icosatetraenoyl-sn-glycero-3-phosphocholine + CoA. It carries out the reaction a 1-acyl-sn-glycero-3-phosphoethanolamine + (9Z,12Z)-octadecadienoyl-CoA = 1-acyl-2-(9Z,12Z)-octadecadienoyl-sn-glycero-3-phosphoethanolamine + CoA. The catalysed reaction is 1-(9Z-octadecenoyl)-sn-glycero-3-phosphoethanolamine + (9Z,12Z)-octadecadienoyl-CoA = 1-(9Z)-octadecenoyl-2-(9Z,12Z)-octadecadienoyl-sn-glycero-3-phosphoethanolamine + CoA. It catalyses the reaction 1-(10Z-heptadecenoyl)-sn-glycero-3-phosphoethanolamine + (9Z,12Z)-octadecadienoyl-CoA = 1-(10Z-heptadecenoyl)-2-(9Z,12Z-octadecadienoyl)-sn-glycero-3-phosphoethanolamine + CoA. The enzyme catalyses a 1-acyl-sn-glycero-3-phosphoethanolamine + (5Z,8Z,11Z,14Z)-eicosatetraenoyl-CoA = 1-acyl-2-(5Z,8Z,11Z,14Z)-eicosatetraenoyl-sn-glycero-3-phosphoethanolamine + CoA. It carries out the reaction 1-hexadecanoyl-sn-glycero-3-phosphoethanolamine + (5Z,8Z,11Z,14Z)-eicosatetraenoyl-CoA = 1-hexadecanoyl-2-(5Z,8Z,11Z,14Z-eicosatetraenoyl)-sn-glycero-3-phosphoethanolamine + CoA. The catalysed reaction is 1-(9Z-octadecenoyl)-sn-glycero-3-phosphoethanolamine + (5Z,8Z,11Z,14Z)-eicosatetraenoyl-CoA = 1-(9Z)-octadecenoyl-2-(5Z,8Z,11Z,14Z)-eicosatetraenoyl-sn-glycero-3-phosphoethanolamine + CoA. It catalyses the reaction 1-(10Z-heptadecenoyl)-sn-glycero-3-phosphoethanolamine + (5Z,8Z,11Z,14Z)-eicosatetraenoyl-CoA = 1-(10Z-heptadecenoyl)-2-(5Z,8Z,11Z,14Z-eicosatetraenoyl)-sn-glycero-3-phosphoethanolamine + CoA. The enzyme catalyses a 1-O-(1Z-alkenyl)-sn-glycero-3-phosphoethanolamine + (5Z,8Z,11Z,14Z)-eicosatetraenoyl-CoA = 1-O-(1Z)-alkenyl-2-(5Z,8Z,11Z,14Z)-eicosatetraenoyl-sn-glycero-3-phosphoethanolamine + CoA. It carries out the reaction a 1-acyl-sn-glycero-3-phospho-L-serine + (9Z,12Z)-octadecadienoyl-CoA = 1-acyl-2-(9Z,12Z-octadecadienoyl)-sn-glycero-3-phospho-L-serine + CoA. The catalysed reaction is a 1-acyl-sn-glycero-3-phospho-L-serine + (5Z,8Z,11Z,14Z)-eicosatetraenoyl-CoA = 1-acyl-2-(5Z,8Z,11Z,14Z-eicosatetraenoyl)-sn-glycero-3-phospho-L-serine + CoA. It catalyses the reaction 1-hexadecanoyl-sn-glycero-3-phospho-L-serine + (9Z)-octadecenoyl-CoA = 1-hexadecanoyl-2-(9Z-octadecenoyl)-sn-glycero-3-phospho-L-serine + CoA. The enzyme catalyses 1-(9Z-octadecenoyl)-sn-glycero-3-phospho-L-serine + (9Z)-octadecenoyl-CoA = 1,2-di-(9Z)-octadecenoyl-sn-glycero-3-phospho-L-serine + CoA. It carries out the reaction 1-hexadecanoyl-sn-glycero-3-phospho-L-serine + (9Z,12Z)-octadecadienoyl-CoA = 1-hexadecanoyl-2-(9Z,12Z-octadecadienoyl)-sn-glycero-3-phospho-L-serine + CoA. The catalysed reaction is 1-(9Z-octadecenoyl)-sn-glycero-3-phospho-L-serine + (9Z,12Z)-octadecadienoyl-CoA = 1-(9Z-octadecenoyl)-2-(9Z,12Z-octadienoyl)-sn-glycero-3-phospho-L-serine + CoA. It catalyses the reaction 1-hexadecanoyl-sn-glycero-3-phospho-L-serine + (5Z,8Z,11Z,14Z)-eicosatetraenoyl-CoA = 1-hexadecanoyl-2-(5Z,8Z,11Z,14Z-eicosatetraenoyl)-sn-glycero-3-phospho-L-serine + CoA. The enzyme catalyses 1-(9Z-octadecenoyl)-sn-glycero-3-phospho-L-serine + (5Z,8Z,11Z,14Z)-eicosatetraenoyl-CoA = 1-(9Z-octadecenoyl)-2-(5Z,8Z,11Z,14Z-eicosatetraenoyl)-sn-glycero-3-phospho-L-serine + CoA. It functions in the pathway lipid metabolism; phospholipid metabolism. With respect to regulation, activity is inhibited by thimerosal. In terms of biological role, lysophospholipid O-acyltransferase (LPLAT) that catalyzes the reacylation step of the phospholipid remodeling process also known as the Lands cycle. Catalyzes transfer of the fatty acyl chain from fatty acyl-CoA to 1-acyl lysophospholipid to form various classes of phospholipids. Converts 1-acyl lysophosphatidylcholine (LPC) into phosphatidylcholine (PC) (LPCAT activity), 1-acyl lysophosphatidylserine (LPS) into phosphatidylserine (PS) (LPSAT activity) and 1-acyl lysophosphatidylethanolamine (LPE) into phosphatidylethanolamine (PE) (LPEAT activity). Favors polyunsaturated fatty acyl-CoAs as acyl donors compared to saturated fatty acyl-CoAs. Has higher activity for LPC acyl acceptors compared to LPEs and LPSs. Can also transfer the fatty acyl chain from fatty acyl-CoA to 1-O-alkyl lysophospholipid or 1-O-alkenyl lysophospholipid with lower efficiency. Acts as a major LPC O-acyltransferase in liver and intestine. As a component of the liver X receptor/NR1H3 or NR1H2 signaling pathway, mainly catalyzes the incorporation of arachidonate into PCs of endoplasmic reticulum (ER) membranes, increasing membrane dynamics and enabling triacylglycerols transfer to nascent very low-density lipoprotein (VLDL) particles. Promotes processing of sterol regulatory protein SREBF1 in hepatocytes, likely by facilitating the translocation of SREBF1-SCAP complex from ER to the Golgi apparatus. Participates in mechanisms by which the liver X receptor/NR1H3 or NR1H2 signaling pathway counteracts lipid-induced ER stress response and inflammation. Down-regulates hepatic inflammation by limiting arachidonic acid availability for synthesis of inflammatory eicosanoids, such as prostaglandins. In enterocytes, acts as a component of a gut-brain feedback loop that coordinates dietary lipid absorption and food intake. Regulates the abundance of PCs containing linoleate and arachidonate in enterocyte membranes, enabling passive diffusion of fatty acids and cholesterol across the membrane for efficient chylomicron assembly. In the intestinal crypt, acts as a component of dietary-responsive phospholipid-cholesterol axis, regulating the biosynthesis of cholesterol and its mitogenic effects on intestinal stem cells. The protein is Lysophospholipid acyltransferase 5 (LPCAT3) of Homo sapiens (Human).